The chain runs to 398 residues: Mannitol-1-phosphate 5-dehydrogenase (398 aa).

An NAD(+)-binding site is contributed by 10–21 (AVHFGAGNIGRG). Lysine 221 is a catalytic residue.

The protein belongs to the mannitol dehydrogenase family. As to quaternary structure, monomer.

The catalysed reaction is D-mannitol 1-phosphate + NAD(+) = beta-D-fructose 6-phosphate + NADH + H(+). Its function is as follows. Catalyzes the NAD(H)-dependent interconversion of D-fructose 6-phosphate and D-mannitol 1-phosphate in the mannitol metabolic pathway. The sequence is that of Mannitol-1-phosphate 5-dehydrogenase from Chaetomium globosum (strain ATCC 6205 / CBS 148.51 / DSM 1962 / NBRC 6347 / NRRL 1970) (Soil fungus).